Reading from the N-terminus, the 626-residue chain is Ankyrin repeat domain-containing protein 13B (626 aa).

Position 1 is an N-acetylmethionine (Met1). 2 ANK repeats span residues 47–76 and 80–109; these read RGRTPLHLATTLGHLECARVLLAHGADVGR and SGWTVLQEAVSTRDLELVQLVLRYRDYQRV. The tract at residues 442–474 is disordered; that stretch reads PVPSVRGSPSSETPSPGSDSSSVSSSSSTTSCR. Positions 449–472 are enriched in low complexity; the sequence is SPSSETPSPGSDSSSVSSSSSTTS. In terms of domain architecture, UIM 1 spans 503–522; that stretch reads DDDDLLQFAIQQSLLEAGSE. 2 disordered regions span residues 534-590 and 595-614; these read NSKP…DEQL and ELSAQEQEERRRRARQEEEE. Residues 554-573 are compositionally biased toward pro residues; the sequence is PPTPQRQPAPPASVPSPRPS. UIM domains lie at 585-604 and 610-626; these read SYDEQLRLAMELSAQEQEER and QEEEELERILRLSLTEQ.

As to quaternary structure, interacts with EGFR (ubiquitinated); the interaction is direct and may regulate EGFR internalization.

It localises to the cell membrane. It is found in the late endosome. The protein localises to the early endosome. Ubiquitin-binding protein that specifically recognizes and binds 'Lys-63'-linked ubiquitin. Does not bind 'Lys-48'-linked ubiquitin. Positively regulates the internalization of ligand-activated EGFR by binding to the Ub moiety of ubiquitinated EGFR at the cell membrane. The protein is Ankyrin repeat domain-containing protein 13B (ANKRD13B) of Homo sapiens (Human).